A 477-amino-acid polypeptide reads, in one-letter code: MTKKVIRKPDSLHDVFERKGGSAPTATHYCAGCGHGILHKLIGEAMDELGIQERAVMISPVGCAVFAYYYFDCGNVQVAHGRAPAVGTGISRAEDDAVVILYQGDGDLASIGLNETIQAANRGEKLAVFFVNNTVYGMTGGQMAPTTLVGEVTVTCPTGRDPRYAGYPLHMCELLDNLQAPVFIERVSLADPKRIRRARRAIKRALEIQRDGKGYAFVEVLSPCPTNLRQDAEGAERFLKEEMEKEFPVKNFRDRSAETEPLIRSESDFSRESLDRIFQIREDSVPDPVDDPEFPEVRVKIAGFGGQGVLSMGLTLAQAACSEGRHTSWYPAYGPEQRGGTSSCGVVISGERVGSPAVDTPDVLVALNQPSLDEFADDVADGGIILYDSTTASFSGGAVRAMGVPALEIARKHGTARAANTVMLGVMMALGLTGLDEESFREAIKFTFAGKEKIIDMNLRILEAGAEWARENIEGEL.

As to quaternary structure, heterotrimer of the VorA, VorB and VorC subunits.

It catalyses the reaction 3-methyl-2-oxobutanoate + 2 oxidized [2Fe-2S]-[ferredoxin] + CoA = 2-methylpropanoyl-CoA + 2 reduced [2Fe-2S]-[ferredoxin] + CO2 + H(+). In Methanothermobacter thermautotrophicus (strain ATCC 29096 / DSM 1053 / JCM 10044 / NBRC 100330 / Delta H) (Methanobacterium thermoautotrophicum), this protein is Ketoisovalerate oxidoreductase subunit VorA (vorA).